The sequence spans 261 residues: Sepiapterin reductase (261 aa).

Met-1 carries the post-translational modification N-acetylmethionine. 15 to 21 (GASRGFG) contributes to the NADP(+) binding site. Residue Ser-33 is modified to Phosphoserine. 43–44 (RS) is an NADP(+) binding site. A Phosphoserine modification is found at Ser-46. 70–71 (DL) is a binding site for NADP(+). Residues 158-159 (SL) and Tyr-171 each bind substrate. Lys-175 lines the NADP(+) pocket. At Ser-196 the chain carries Phosphoserine. Gly-200 provides a ligand contact to substrate. 202–207 (LDNDMQ) is an NADP(+) binding site. Residue Ser-214 is modified to Phosphoserine. Residues Lys-222 and Asp-258 each contribute to the substrate site.

The protein belongs to the sepiapterin reductase family. Homodimer.

The protein localises to the cytoplasm. It carries out the reaction L-erythro-7,8-dihydrobiopterin + NADP(+) = L-sepiapterin + NADPH + H(+). The catalysed reaction is (6R)-L-erythro-5,6,7,8-tetrahydrobiopterin + 2 NADP(+) = 6-pyruvoyl-5,6,7,8-tetrahydropterin + 2 NADPH + 2 H(+). Catalyzes the final one or two reductions in tetra-hydrobiopterin biosynthesis to form 5,6,7,8-tetrahydrobiopterin. This is Sepiapterin reductase (Spr) from Mus musculus (Mouse).